The sequence spans 126 residues: Holo-[acyl-carrier-protein] synthase (126 aa).

D9 and E58 together coordinate Mg(2+).

The protein belongs to the P-Pant transferase superfamily. AcpS family. It depends on Mg(2+) as a cofactor.

The protein localises to the cytoplasm. It catalyses the reaction apo-[ACP] + CoA = holo-[ACP] + adenosine 3',5'-bisphosphate + H(+). Functionally, transfers the 4'-phosphopantetheine moiety from coenzyme A to a Ser of acyl-carrier-protein. This chain is Holo-[acyl-carrier-protein] synthase, found in Vibrio atlanticus (strain LGP32) (Vibrio splendidus (strain Mel32)).